The chain runs to 523 residues: MSFDINWEKLTTDNQINDSIKNFLHEQFQSLQLPSYISNLEVVDFKLGTIPPEITIRHIGDPFEEFYANPDDGDGDGNNDEEVLKDKSTKLKNRQAVNIIPNKAGATHEADIINDHDYGDEDDIDDDYDNDSDDYDDDENDGLHDHGEDEENEESSQYDEDRLSNITEGLSLVELLASASTPKRTSPQRPPLISPRGEVTQQTLSKPKEPFQSILNPYGVTSVLNQGSNAAKNTTATSIAAGTTAANGVGTLKDIFDQNNFSSRVIPKIKTKEESVSGDQQQGKQTGKANEKGQKHKHEHEEEQGSDKQNAKNKASDDVQLILEINYKGNLYIDLLVTLLVNYPSPNFISLPIKLHVTDLVIHTIATIAYLKHAVYVSFLCDVNDEADGFSGASSNASTPNVTGTTSGGGNSGGNIVDYYFSDPNNKERIDIIKKIKIESEIGEVENNILRNVGKVEKFLMEQLRAILRDEIAWPSWICVDMAENDDEEEDDDDDDHDEDNEGRGRMRDTGDVDVRDHDKKED.

Residues 1-483 (MSFDINWEKL…WPSWICVDMA (483 aa)) form the SMP-LTD domain. A compositionally biased stretch (basic and acidic residues) spans 108–117 (HEADIINDHD). Disordered regions lie at residues 108 to 160 (HEAD…QYDE), 178 to 213 (SAST…PFQS), 270 to 313 (KTKE…NAKN), and 483 to 523 (AEND…KKED). 2 stretches are compositionally biased toward acidic residues: residues 118 to 140 (YGDE…DDEN) and 148 to 158 (EDEENEESSQY). 2 stretches are compositionally biased toward polar residues: residues 178–187 (SASTPKRTSP) and 277–288 (SGDQQQGKQTGK). Positions 289–313 (ANEKGQKHKHEHEEEQGSDKQNAKN) are enriched in basic and acidic residues. The span at 483-501 (AENDDEEEDDDDDDHDEDN) shows a compositional bias: acidic residues. Residues 502 to 523 (EGRGRMRDTGDVDVRDHDKKED) are compositionally biased toward basic and acidic residues.

The protein belongs to the MDM12 family. Component of the ER-mitochondria encounter structure (ERMES) or MDM complex, composed of MMM1, MDM10, MDM12 and MDM34. An MMM1 homodimer associates with one molecule of MDM12 on each side in a pairwise head-to-tail manner, and the SMP-LTD domains of MMM1 and MDM12 generate a continuous hydrophobic tunnel for phospholipid trafficking.

It is found in the mitochondrion outer membrane. Its subcellular location is the endoplasmic reticulum membrane. Its function is as follows. Component of the ERMES/MDM complex, which serves as a molecular tether to connect the endoplasmic reticulum (ER) and mitochondria. Components of this complex are involved in the control of mitochondrial shape and protein biogenesis, and function in nonvesicular lipid trafficking between the ER and mitochondria. MDM12 is required for the interaction of the ER-resident membrane protein MMM1 and the outer mitochondrial membrane-resident beta-barrel protein MDM10. The MDM12-MMM1 subcomplex functions in the major beta-barrel assembly pathway that is responsible for biogenesis of all mitochondrial outer membrane beta-barrel proteins, and acts in a late step after the SAM complex. The MDM10-MDM12-MMM1 subcomplex further acts in the TOM40-specific pathway after the action of the MDM12-MMM1 complex. Essential for establishing and maintaining the structure of mitochondria and maintenance of mtDNA nucleoids. In Lodderomyces elongisporus (strain ATCC 11503 / CBS 2605 / JCM 1781 / NBRC 1676 / NRRL YB-4239) (Yeast), this protein is Mitochondrial distribution and morphology protein 12.